A 278-amino-acid chain; its full sequence is MTEAFARAKINLTLHVTGQRPDGYHLLDSLVVFADVGDRVRTEPAEALSLAITGPQAVNLPVSDDNLVLRAARAMGGQGARITLEKHLPVASGIGGGSADAAATLKALAELWQRPLPEAAAVLRLGADVPVCLEGRAVRMAGVGEILEPLAGPLPPAWLVLANPGVSVPTPPVFKALARRDNPPMPERLPDWGSADELAAFLAAMRNDLEAPAIALAPEVAETRAALAAEPGCLIARMSGSGATCFGLFAEERPARAAAEALRAAHPGWWIEPARMAG.

The active site involves Lys9. Position 89–99 (89–99 (PVASGIGGGSA)) interacts with ATP. Residue Asp128 is part of the active site.

Belongs to the GHMP kinase family. IspE subfamily.

The enzyme catalyses 4-CDP-2-C-methyl-D-erythritol + ATP = 4-CDP-2-C-methyl-D-erythritol 2-phosphate + ADP + H(+). It participates in isoprenoid biosynthesis; isopentenyl diphosphate biosynthesis via DXP pathway; isopentenyl diphosphate from 1-deoxy-D-xylulose 5-phosphate: step 3/6. Its function is as follows. Catalyzes the phosphorylation of the position 2 hydroxy group of 4-diphosphocytidyl-2C-methyl-D-erythritol. The chain is 4-diphosphocytidyl-2-C-methyl-D-erythritol kinase from Cereibacter sphaeroides (strain ATCC 17025 / ATH 2.4.3) (Rhodobacter sphaeroides).